The primary structure comprises 425 residues: D-tagatose 6-phosphate 4-epimerase (425 aa).

The protein belongs to the GatZ/KbaZ family.

The catalysed reaction is keto-D-tagatose 6-phosphate = keto-D-fructose 6-phosphate. It participates in carbohydrate metabolism. Functionally, involved in galactitol and D-altritol catabolism. Catalyzes the epimerization of D-tagatose 6-phosphate to D-fructose 6-phosphate. The protein is D-tagatose 6-phosphate 4-epimerase of Agrobacterium fabrum (strain C58 / ATCC 33970) (Agrobacterium tumefaciens (strain C58)).